A 476-amino-acid polypeptide reads, in one-letter code: Aspartyl/glutamyl-tRNA(Asn/Gln) amidotransferase subunit B (476 aa).

The protein belongs to the GatB/GatE family. GatB subfamily. In terms of assembly, heterotrimer of A, B and C subunits.

It carries out the reaction L-glutamyl-tRNA(Gln) + L-glutamine + ATP + H2O = L-glutaminyl-tRNA(Gln) + L-glutamate + ADP + phosphate + H(+). The enzyme catalyses L-aspartyl-tRNA(Asn) + L-glutamine + ATP + H2O = L-asparaginyl-tRNA(Asn) + L-glutamate + ADP + phosphate + 2 H(+). Its function is as follows. Allows the formation of correctly charged Asn-tRNA(Asn) or Gln-tRNA(Gln) through the transamidation of misacylated Asp-tRNA(Asn) or Glu-tRNA(Gln) in organisms which lack either or both of asparaginyl-tRNA or glutaminyl-tRNA synthetases. The reaction takes place in the presence of glutamine and ATP through an activated phospho-Asp-tRNA(Asn) or phospho-Glu-tRNA(Gln). The sequence is that of Aspartyl/glutamyl-tRNA(Asn/Gln) amidotransferase subunit B from Oceanobacillus iheyensis (strain DSM 14371 / CIP 107618 / JCM 11309 / KCTC 3954 / HTE831).